The chain runs to 551 residues: MFS efflux transporter aclA (551 aa).

The next 8 membrane-spanning stretches (helical) occupy residues W26–I46, V64–I84, P93–S113, G125–L145, I154–V174, W181–L201, W220–G240, and V251–S271. An N-linked (GlcNAc...) asparagine glycan is attached at N286. The next 6 membrane-spanning stretches (helical) occupy residues V294–F314, V327–M347, L356–A376, I385–I405, A420–F440, and L492–V512.

It belongs to the major facilitator superfamily.

Its subcellular location is the membrane. In terms of biological role, MFS efflux transporter; part of the gene cluster that mediates the biosynthesis of aspirochlorine (or antibiotic A30641), an unusual halogenated spiro compound with distinctive antifungal properties due to selective inhibition of protein biosynthesis, and which is also active against bacteria, viruses, and murine tumor cells. In Aspergillus oryzae (strain ATCC 42149 / RIB 40) (Yellow koji mold), this protein is MFS efflux transporter aclA.